Here is a 142-residue protein sequence, read N- to C-terminus: Hemoglobin subunit zeta (142 aa).

N-acetylserine is present on S2. Residues 2-142 (SLMKNERAII…LSSILTEKYR (141 aa)) form the Globin domain. T29 bears the Phosphothreonine mark. S53 carries the phosphoserine modification. Position 59 (H59) interacts with heme b. S73 is subject to Phosphoserine. Residue H88 participates in heme b binding.

Belongs to the globin family. As to quaternary structure, heterotetramer of two zeta chains and beta-type chains.

The zeta chain is an alpha-type chain of mammalian embryonic hemoglobin. The chain is Hemoglobin subunit zeta (Hbz) from Mus musculus (Mouse).